A 656-amino-acid chain; its full sequence is Leucine aminopeptidase 2 (656 aa).

Substrate is bound by residues 173–175 and 302–307; these read QLE and PYGGME. H331 provides a ligand contact to Zn(2+). The active-site Proton acceptor is the E332. H335 and E354 together coordinate Zn(2+). The Proton donor role is filled by Y420.

It belongs to the peptidase M1 family. Zn(2+) is required as a cofactor.

Its subcellular location is the cytoplasm. It localises to the nucleus. The catalysed reaction is an epoxide + H2O = an ethanediol. In terms of biological role, aminopeptidase that preferentially cleaves di- and tripeptides. Also has low epoxide hydrolase activity (in vitro). Can hydrolyze the epoxide leukotriene LTA(4) but it forms preferentially 5,6-dihydroxy-7,9,11,14-eicosatetraenoic acid rather than the cytokine leukotriene B(4) as the product compared to the homologous mammalian enzyme (in vitro). The chain is Leucine aminopeptidase 2 from Vanderwaltozyma polyspora (strain ATCC 22028 / DSM 70294 / BCRC 21397 / CBS 2163 / NBRC 10782 / NRRL Y-8283 / UCD 57-17) (Kluyveromyces polysporus).